Reading from the N-terminus, the 240-residue chain is Orotidine 5'-phosphate decarboxylase (240 aa).

Substrate contacts are provided by residues aspartate 10, lysine 32, 59–68, threonine 122, arginine 183, glutamine 192, glycine 212, and arginine 213; that span reads DLKLHDIPNT. The active-site Proton donor is lysine 61.

It belongs to the OMP decarboxylase family. Type 1 subfamily. In terms of assembly, homodimer.

It carries out the reaction orotidine 5'-phosphate + H(+) = UMP + CO2. Its pathway is pyrimidine metabolism; UMP biosynthesis via de novo pathway; UMP from orotate: step 2/2. Its function is as follows. Catalyzes the decarboxylation of orotidine 5'-monophosphate (OMP) to uridine 5'-monophosphate (UMP). This chain is Orotidine 5'-phosphate decarboxylase, found in Carboxydothermus hydrogenoformans (strain ATCC BAA-161 / DSM 6008 / Z-2901).